A 490-amino-acid chain; its full sequence is Glutamate--tRNA ligase (490 aa).

The short motif at 10–20 (PSPTGSLHIGG) is the 'HIGH' region element. The short motif at 251–255 (KLSKR) is the 'KMSKS' region element. An ATP-binding site is contributed by Lys254.

Belongs to the class-I aminoacyl-tRNA synthetase family. Glutamate--tRNA ligase type 1 subfamily. In terms of assembly, monomer.

Its subcellular location is the cytoplasm. The catalysed reaction is tRNA(Glu) + L-glutamate + ATP = L-glutamyl-tRNA(Glu) + AMP + diphosphate. Its function is as follows. Catalyzes the attachment of glutamate to tRNA(Glu) in a two-step reaction: glutamate is first activated by ATP to form Glu-AMP and then transferred to the acceptor end of tRNA(Glu). The chain is Glutamate--tRNA ligase from Moorella thermoacetica (strain ATCC 39073 / JCM 9320).